Reading from the N-terminus, the 408-residue chain is ATP phosphoribosyltransferase regulatory subunit (408 aa).

The protein belongs to the class-II aminoacyl-tRNA synthetase family. HisZ subfamily. As to quaternary structure, heteromultimer composed of HisG and HisZ subunits.

The protein localises to the cytoplasm. Its pathway is amino-acid biosynthesis; L-histidine biosynthesis; L-histidine from 5-phospho-alpha-D-ribose 1-diphosphate: step 1/9. Required for the first step of histidine biosynthesis. May allow the feedback regulation of ATP phosphoribosyltransferase activity by histidine. The polypeptide is ATP phosphoribosyltransferase regulatory subunit (Gloeothece citriformis (strain PCC 7424) (Cyanothece sp. (strain PCC 7424))).